The chain runs to 85 residues: Conotoxin Im28.1 (85 aa).

The signal sequence occupies residues Met-1–Ala-21. Positions Val-22–Lys-40 are excised as a propeptide.

It belongs to the conotoxin D superfamily. Contains 5 disulfide bonds. In terms of tissue distribution, expressed by the venom duct.

It is found in the secreted. In terms of biological role, probable neurotoxin. The polypeptide is Conotoxin Im28.1 (Conus imperialis (Imperial cone)).